Here is a 472-residue protein sequence, read N- to C-terminus: Eukaryotic translation initiation factor 2 subunit 3 (472 aa).

A2 is subject to N-acetylalanine; partial. S16 is modified (phosphoserine). A tr-type G domain is found at Q39–R248. The tract at residues G48–S55 is G1. A51–T56 contributes to the GTP binding site. Residues N76–K80 form a G2 region. The interval D134–G137 is G3. GTP contacts are provided by residues N190–D193 and S225–Q227. The segment at N190 to D193 is G4. The interval S225–Q227 is G5. Positions G457–V469 are interacts with CDC123.

Belongs to the TRAFAC class translation factor GTPase superfamily. Classic translation factor GTPase family. EIF2G subfamily. In terms of assembly, eukaryotic translation initiation factor 2 eIF2 is a heterotrimeric complex composed of an alpha (EIF2S1), a beta (EIF2S2) and a gamma (EIF2S3) chain. eIF2 is member of the 43S pre-initiation complex (43S PIC). Interacts (via C-terminus) with CDC123; the interaction is direct. In terms of tissue distribution, expressed in testis, brain, liver and muscle.

Its subcellular location is the cytoplasm. The protein resides in the cytosol. It catalyses the reaction GTP + H2O = GDP + phosphate + H(+). In terms of biological role, member of the eIF2 complex that functions in the early steps of protein synthesis by forming a ternary complex with GTP and initiator tRNA. This complex binds to a 40S ribosomal subunit, followed by mRNA binding to form the 43S pre-initiation complex (43S PIC). Junction of the 60S ribosomal subunit to form the 80S initiation complex is preceded by hydrolysis of the GTP bound to eIF2 and release of an eIF2-GDP binary complex. In order for eIF2 to recycle and catalyze another round of initiation, the GDP bound to eIF2 must exchange with GTP by way of a reaction catalyzed by eIF-2B. The sequence is that of Eukaryotic translation initiation factor 2 subunit 3 (EIF2S3) from Homo sapiens (Human).